The sequence spans 127 residues: Protein ApaG (127 aa).

An ApaG domain is found at 3 to 127 (ESEKYRIEVE…FMLAMPRVLH (125 aa)).

This Aromatoleum aromaticum (strain DSM 19018 / LMG 30748 / EbN1) (Azoarcus sp. (strain EbN1)) protein is Protein ApaG.